The following is a 151-amino-acid chain: Protein INO4 (151 aa).

The region spanning 45–97 (QIRINHVSSEKKRRELERAIFDELVAVVPDLQPQESRSELIIYLKSLSYLSWL) is the bHLH domain. Residues 112–137 (HEAKTGSSSSSDPVQEQNGNIRDLVP) are disordered. Polar residues predominate over residues 116 to 131 (TGSSSSSDPVQEQNGN).

As to quaternary structure, efficient DNA binding requires dimerization with another bHLH protein.

The protein resides in the nucleus. Transcriptional activator of phospholipid synthetic genes (such as INO1, CHO1/PSS, CHO2/PEM1, OPI3/PEM2, etc.). The chain is Protein INO4 (INO4) from Saccharomyces cerevisiae (strain ATCC 204508 / S288c) (Baker's yeast).